The chain runs to 502 residues: Putative diacyglycerol O-acyltransferase Rv1760 (502 aa).

Residue His-174 is the Proton acceptor of the active site.

The protein belongs to the long-chain O-acyltransferase family.

It catalyses the reaction an acyl-CoA + a 1,2-diacyl-sn-glycerol = a triacyl-sn-glycerol + CoA. The catalysed reaction is di-(9Z)-octadecenoylglycerol + (9Z)-octadecenoyl-CoA = 1,2,3-tri-(9Z-octadecenoyl)-glycerol + CoA. It functions in the pathway glycerolipid metabolism; triacylglycerol biosynthesis. Functionally, catalyzes the terminal and only committed step in triacylglycerol synthesis by using diacylglycerol and fatty acyl CoA as substrates. Required for storage lipid synthesis. In terms of biological role, upon expression in E.coli functions weakly as a triacylglycerol synthase, making triacylglycerol (TG) from diolein and long-chain fatty acyl-CoA. Has very weak wax synthase activity, incorporating palmityl alcohol into wax esters in the presence of palmitoyl-CoA. This Mycobacterium tuberculosis (strain ATCC 25618 / H37Rv) protein is Putative diacyglycerol O-acyltransferase Rv1760.